Reading from the N-terminus, the 321-residue chain is Cytochrome c biogenesis protein CcsA (321 aa).

Helical transmembrane passes span 17-37 (IISI…IIGL), 41-61 (LEKG…IRWV), 68-88 (LSNL…IHIF), 143-163 (MLLS…LLVI), 227-247 (IINL…VWAN), 260-277 (ETWA…LHTR), and 288-308 (AIVA…VNLL).

It belongs to the CcmF/CycK/Ccl1/NrfE/CcsA family. In terms of assembly, may interact with Ccs1.

It localises to the plastid. The protein localises to the chloroplast thylakoid membrane. Required during biogenesis of c-type cytochromes (cytochrome c6 and cytochrome f) at the step of heme attachment. The polypeptide is Cytochrome c biogenesis protein CcsA (Piper cenocladum (Ant piper)).